A 68-amino-acid polypeptide reads, in one-letter code: Large ribosomal subunit protein uL29 (68 aa).

The protein belongs to the universal ribosomal protein uL29 family.

The protein is Large ribosomal subunit protein uL29 of Finegoldia magna (strain ATCC 29328 / DSM 20472 / WAL 2508) (Peptostreptococcus magnus).